The following is a 215-amino-acid chain: Ribonuclease T (215 aa).

The Exonuclease domain maps to Val20 to Phe194. Mg(2+) is bound by residues Asp23, Glu25, His181, and Asp186. The Proton donor/acceptor role is filled by His181.

Belongs to the RNase T family. In terms of assembly, homodimer. Requires Mg(2+) as cofactor.

In terms of biological role, trims short 3' overhangs of a variety of RNA species, leaving a one or two nucleotide 3' overhang. Responsible for the end-turnover of tRNA: specifically removes the terminal AMP residue from uncharged tRNA (tRNA-C-C-A). Also appears to be involved in tRNA biosynthesis. This Yersinia pseudotuberculosis serotype O:1b (strain IP 31758) protein is Ribonuclease T.